A 149-amino-acid chain; its full sequence is D-aminoacyl-tRNA deacylase (149 aa).

A Gly-cisPro motif, important for rejection of L-amino acids motif is present at residues 137 to 138 (GP).

It belongs to the DTD family. In terms of assembly, homodimer.

It localises to the cytoplasm. It carries out the reaction glycyl-tRNA(Ala) + H2O = tRNA(Ala) + glycine + H(+). The catalysed reaction is a D-aminoacyl-tRNA + H2O = a tRNA + a D-alpha-amino acid + H(+). In terms of biological role, an aminoacyl-tRNA editing enzyme that deacylates mischarged D-aminoacyl-tRNAs. Also deacylates mischarged glycyl-tRNA(Ala), protecting cells against glycine mischarging by AlaRS. Acts via tRNA-based rather than protein-based catalysis; rejects L-amino acids rather than detecting D-amino acids in the active site. By recycling D-aminoacyl-tRNA to D-amino acids and free tRNA molecules, this enzyme counteracts the toxicity associated with the formation of D-aminoacyl-tRNA entities in vivo and helps enforce protein L-homochirality. This is D-aminoacyl-tRNA deacylase from Janthinobacterium sp. (strain Marseille) (Minibacterium massiliensis).